The sequence spans 329 residues: Neuropeptides B/W receptor type 1 (329 aa).

The Extracellular segment spans residues Met1–Pro43. N-linked (GlcNAc...) asparagine glycosylation is found at Asn3, Asn13, and Asn25. Residues Val44–Leu64 form a helical membrane-spanning segment. At Leu65 to Asn75 the chain is on the cytoplasmic side. A helical membrane pass occupies residues Val76–Ile96. Topologically, residues Ala97–Lys112 are extracellular. Cys111 and Cys190 are oxidised to a cystine. The chain crosses the membrane as a helical span at residues Leu113–Ser133. The Cytoplasmic segment spans residues Ala134–Arg158. Residues Ala159 to Ala179 traverse the membrane as a helical segment. At Arg180–Thr209 the chain is on the extracellular side. Residues Leu210–Cys230 traverse the membrane as a helical segment. At Arg231–Arg250 the chain is on the cytoplasmic side. The chain crosses the membrane as a helical span at residues Val251–Leu271. The Extracellular segment spans residues Ser272 to Gly289. The chain crosses the membrane as a helical span at residues Ile290–Leu312. Over Asp313–Ala329 the chain is Cytoplasmic.

It belongs to the G-protein coupled receptor 1 family.

The protein localises to the cell membrane. Functionally, interacts specifically with a number of opioid ligands. Receptor for neuropeptides B and W, which may be involved in neuroendocrine system regulation, food intake and the organization of other signals. The protein is Neuropeptides B/W receptor type 1 (Npbwr1) of Mus musculus (Mouse).